Consider the following 354-residue polypeptide: Putative cinnamyl alcohol dehydrogenase 4 (354 aa).

Cysteine 47, histidine 69, glutamate 70, cysteine 100, cysteine 103, cysteine 106, cysteine 114, and cysteine 163 together coordinate Zn(2+). Residues threonine 167, 188–193 (GLGGLG), 211–216 (STSESK), threonine 251, and 297–299 (SVT) each bind NADP(+).

Belongs to the zinc-containing alcohol dehydrogenase family. In terms of assembly, homodimer. Zn(2+) is required as a cofactor.

The catalysed reaction is (E)-cinnamyl alcohol + NADP(+) = (E)-cinnamaldehyde + NADPH + H(+). It catalyses the reaction (E)-coniferol + NADP(+) = (E)-coniferaldehyde + NADPH + H(+). It carries out the reaction (E)-sinapyl alcohol + NADP(+) = (E)-sinapaldehyde + NADPH + H(+). The enzyme catalyses (E)-4-coumaroyl alcohol + NADP(+) = (E)-4-coumaraldehyde + NADPH + H(+). The catalysed reaction is (E)-caffeyl alcohol + NADP(+) = (E)-caffeyl aldehyde + NADPH + H(+). The protein operates within aromatic compound metabolism; phenylpropanoid biosynthesis. Its function is as follows. Involved in lignin biosynthesis. Catalyzes the final step specific for the production of lignin monomers. Catalyzes the NADPH-dependent reduction of coniferaldehyde, 5-hydroxyconiferaldehyde, sinapaldehyde, 4-coumaraldehyde and caffeyl aldehyde to their respective alcohols. This Oryza sativa subsp. japonica (Rice) protein is Putative cinnamyl alcohol dehydrogenase 4.